The primary structure comprises 548 residues: Probable malate:quinone oxidoreductase (548 aa).

It belongs to the MQO family. Requires FAD as cofactor.

It catalyses the reaction (S)-malate + a quinone = a quinol + oxaloacetate. It functions in the pathway carbohydrate metabolism; tricarboxylic acid cycle; oxaloacetate from (S)-malate (quinone route): step 1/1. In Escherichia coli (strain SE11), this protein is Probable malate:quinone oxidoreductase.